The following is a 100-amino-acid chain: Aspartyl/glutamyl-tRNA(Asn/Gln) amidotransferase subunit C (100 aa).

Belongs to the GatC family. In terms of assembly, heterotrimer of A, B and C subunits.

The catalysed reaction is L-glutamyl-tRNA(Gln) + L-glutamine + ATP + H2O = L-glutaminyl-tRNA(Gln) + L-glutamate + ADP + phosphate + H(+). It catalyses the reaction L-aspartyl-tRNA(Asn) + L-glutamine + ATP + H2O = L-asparaginyl-tRNA(Asn) + L-glutamate + ADP + phosphate + 2 H(+). In terms of biological role, allows the formation of correctly charged Asn-tRNA(Asn) or Gln-tRNA(Gln) through the transamidation of misacylated Asp-tRNA(Asn) or Glu-tRNA(Gln) in organisms which lack either or both of asparaginyl-tRNA or glutaminyl-tRNA synthetases. The reaction takes place in the presence of glutamine and ATP through an activated phospho-Asp-tRNA(Asn) or phospho-Glu-tRNA(Gln). The polypeptide is Aspartyl/glutamyl-tRNA(Asn/Gln) amidotransferase subunit C (Staphylococcus carnosus (strain TM300)).